The following is an 841-amino-acid chain: Follistatin-related protein 4 (841 aa).

An N-terminal signal peptide occupies residues 1–22; that stretch reads MKPGGFWPHLALLGVSLPAVLG. The tract at residues 29–54 is disordered; it reads SRSPNMVPGESQAEETRGFEVTRREG. A compositionally biased stretch (basic and acidic residues) spans 42–54; sequence EETRGFEVTRREG. Residues 80–134 enclose the Kazal-like domain; sequence TTGQPSCQCLEVCRPRYMPVCGSDGRLYGNHCELRRAACLLGKRIVSVHSKDCFL. 3 cysteine pairs are disulfide-bonded: C86/C118, C92/C111, and C100/C132. 2 consecutive EF-hand domains span residues 173 to 208 and 225 to 247; these read QKRLLVESLFKDLDADGNGHLGSLELAQYVLKEQDM and DYNSDGSLTLGEFYTAFQVIQLS. Residues D186, D188, N190, H192, E197, D225, N227, D229, S231, and E236 each coordinate Ca(2+). Ig-like domains follow at residues 250–336 and 340–425; these read PEDK…VLQV and PVIR…EDIS. Intrachain disulfides connect C269–C320 and C361–C412. N317 is a glycosylation site (N-linked (GlcNAc...) asparagine).

The protein localises to the secreted. This is Follistatin-related protein 4 (Fstl4) from Mus musculus (Mouse).